The primary structure comprises 323 residues: tRNA U34 carboxymethyltransferase (323 aa).

Carboxy-S-adenosyl-L-methionine-binding positions include Lys-93, Trp-107, Lys-112, Gly-132, Asp-154–Ser-156, Val-182–Glu-183, Met-197, Tyr-201, and Arg-316.

This sequence belongs to the class I-like SAM-binding methyltransferase superfamily. CmoB family. In terms of assembly, homotetramer.

It catalyses the reaction carboxy-S-adenosyl-L-methionine + 5-hydroxyuridine(34) in tRNA = 5-carboxymethoxyuridine(34) in tRNA + S-adenosyl-L-homocysteine + H(+). Catalyzes carboxymethyl transfer from carboxy-S-adenosyl-L-methionine (Cx-SAM) to 5-hydroxyuridine (ho5U) to form 5-carboxymethoxyuridine (cmo5U) at position 34 in tRNAs. The sequence is that of tRNA U34 carboxymethyltransferase from Pseudoalteromonas atlantica (strain T6c / ATCC BAA-1087).